The primary structure comprises 507 residues: Lysine--tRNA ligase (507 aa).

2 residues coordinate Mg(2+): Glu416 and Glu423.

This sequence belongs to the class-II aminoacyl-tRNA synthetase family. As to quaternary structure, homodimer. Mg(2+) is required as a cofactor.

Its subcellular location is the cytoplasm. It catalyses the reaction tRNA(Lys) + L-lysine + ATP = L-lysyl-tRNA(Lys) + AMP + diphosphate. The protein is Lysine--tRNA ligase of Hahella chejuensis (strain KCTC 2396).